Reading from the N-terminus, the 285-residue chain is UPF0354 protein SA1564 (285 aa).

The protein belongs to the UPF0354 family.

The chain is UPF0354 protein SA1564 from Staphylococcus aureus (strain N315).